The sequence spans 433 residues: O-methyltransferase aclM (433 aa).

Positions L5–K37 form a coiled coil. S-adenosyl-L-methionine is bound by residues D277 and G311 to F313. H330 serves as the catalytic Proton acceptor.

The protein belongs to the class I-like SAM-binding methyltransferase superfamily. Cation-independent O-methyltransferase family. COMT subfamily.

The protein operates within mycotoxin biosynthesis. In terms of biological role, O-methyltransferase; part of the gene cluster that mediates the biosynthesis of aspirochlorine (or antibiotic A30641), an unusual halogenated spiro compound with distinctive antifungal properties due to selective inhibition of protein biosynthesis, and which is also active against bacteria, viruses, and murine tumor cells. The non-ribosomal peptide synthetase (NRPS) aclP is responsible the formation of the diketopiperazine (DKP) core from the condensation of 2 phenylalanine residues. One Phe residue is tailored into chlorotyrosine by hydroxylation and chlorination, whereas the second Phe undergoes an unprecedented C-C bond cleavage to be converted into glycine. After formation of the DKP, sulfur is incorporated into the DKP by conjugation with glutathione by aclG, followed by its stepwise degradation to the thiol by aclI, aclJ and aclK, and the dithiol oxidation by aclT. In addition, oxygenases (aclB, aclC, aclL and aclO) and O-methyltransferases (aclM and aclU) act as tailoring enzymes to produce the intermediate dechloroaspirochlorine. Ultimately, chlorination of dechloroaspirochlorine by the halogenase aclH is the last step in the aspirochlorine pathway. This chain is O-methyltransferase aclM, found in Aspergillus oryzae (strain ATCC 42149 / RIB 40) (Yellow koji mold).